A 189-amino-acid polypeptide reads, in one-letter code: MVKVIASSVRKGNVLDVDGKLYVVLTAANFHPGKGTPVTQVDMRRIVDGVKVSERWRTTEQVERAFVEDVNFQYLYEDGEGFHFMNPVSYDQVVVDVETMGDQKAFLQEGMTCVLSMHEGIALALQLPRHVTLEIAETEPVVKGQTASSSYKPAILSNGVRTLVPPHINAGTRVVIATEDVSYVERAKD.

It belongs to the elongation factor P family.

Its subcellular location is the cytoplasm. It participates in protein biosynthesis; polypeptide chain elongation. Involved in peptide bond synthesis. Stimulates efficient translation and peptide-bond synthesis on native or reconstituted 70S ribosomes in vitro. Probably functions indirectly by altering the affinity of the ribosome for aminoacyl-tRNA, thus increasing their reactivity as acceptors for peptidyl transferase. This Rhizobium rhizogenes (strain K84 / ATCC BAA-868) (Agrobacterium radiobacter) protein is Elongation factor P.